A 169-amino-acid polypeptide reads, in one-letter code: Inorganic pyrophosphatase (169 aa).

Residues lysine 26, arginine 40, and tyrosine 52 each coordinate substrate. Mg(2+)-binding residues include aspartate 62, aspartate 67, and aspartate 99. Tyrosine 138 serves as a coordination point for substrate.

Belongs to the PPase family. In terms of assembly, homohexamer. The cofactor is Mg(2+).

Its subcellular location is the cytoplasm. It catalyses the reaction diphosphate + H2O = 2 phosphate + H(+). Its function is as follows. Catalyzes the hydrolysis of inorganic pyrophosphate (PPi) forming two phosphate ions. This Thermoplasma volcanium (strain ATCC 51530 / DSM 4299 / JCM 9571 / NBRC 15438 / GSS1) protein is Inorganic pyrophosphatase.